Consider the following 60-residue polypeptide: Cecropin-B1 (60 aa).

Residues 1-24 (MNFSKVFALVLLIGLVLLTGHTEA) form the signal peptide.

This sequence belongs to the cecropin family.

It localises to the secreted. Putative antimicrobial peptide. Partially neutralizes lipopolysaccharides (LPS). Exhibits anti-inflammatory properties: inhibits LPS-induced iNOS/NOS2 transcription, nitric oxide (NO) and pro-inflammatory cytokine production in mouse macrophages and human peripheral blood mononuclear cells (PBMCs); inhibits LPS-induced activation of MAPK and NF-kappa-B signaling pathways in mouse macrophages. The polypeptide is Cecropin-B1 (Aedes aegypti (Yellowfever mosquito)).